We begin with the raw amino-acid sequence, 344 residues long: tRNA N6-adenosine threonylcarbamoyltransferase (344 aa).

2 residues coordinate Fe cation: H110 and H114. Residues 133–137 (VVSGA), D166, G179, and N278 contribute to the substrate site. D303 is a binding site for Fe cation.

This sequence belongs to the KAE1 / TsaD family. It depends on Fe(2+) as a cofactor.

It localises to the cytoplasm. It catalyses the reaction L-threonylcarbamoyladenylate + adenosine(37) in tRNA = N(6)-L-threonylcarbamoyladenosine(37) in tRNA + AMP + H(+). Its function is as follows. Required for the formation of a threonylcarbamoyl group on adenosine at position 37 (t(6)A37) in tRNAs that read codons beginning with adenine. Is involved in the transfer of the threonylcarbamoyl moiety of threonylcarbamoyl-AMP (TC-AMP) to the N6 group of A37, together with TsaE and TsaB. TsaD likely plays a direct catalytic role in this reaction. The protein is tRNA N6-adenosine threonylcarbamoyltransferase of Chlamydia pneumoniae (Chlamydophila pneumoniae).